A 309-amino-acid polypeptide reads, in one-letter code: Anamorsin (309 aa).

The tract at residues 6-172 (ISPGQLVAVF…KPNFEVGSSS (167 aa)) is N-terminal SAM-like domain. Positions 173–222 (QLKLPNKKSSSVKPVVDPAAAKLWTLSANDMEDDSVDLIDSDELLDPEDL) are linker. Serine 182, serine 183, and serine 213 each carry phosphoserine. Residues cysteine 235, cysteine 244, cysteine 247, and cysteine 249 each coordinate [2Fe-2S] cluster. The interval 235-249 (CGEGKKRKACKNCTC) is fe-S binding site A. Serine 269 bears the Phosphoserine mark. Cysteine 271, cysteine 274, cysteine 282, and cysteine 285 together coordinate [4Fe-4S] cluster. 2 short sequence motifs (cx2C motif) span residues 271–274 (CGNC) and 282–285 (CANC). The tract at residues 271–285 (CGNCYLGDAFRCANC) is fe-S binding site B. 2 positions are modified to phosphoserine: serine 302 and serine 304.

This sequence belongs to the anamorsin family. As to quaternary structure, monomer. Interacts with NDOR1. Interacts with CHCHD4. [2Fe-2S] cluster serves as cofactor. It depends on [4Fe-4S] cluster as a cofactor.

Its subcellular location is the cytoplasm. It localises to the nucleus. It is found in the mitochondrion intermembrane space. Its function is as follows. Component of the cytosolic iron-sulfur (Fe-S) protein assembly (CIA) machinery required for the maturation of extramitochondrial Fe-S proteins. Part of an electron transfer chain functioning in an early step of cytosolic Fe-S biogenesis, facilitating the de novo assembly of a [4Fe-4S] cluster on the scaffold complex NUBP1-NUBP2. Electrons are transferred to CIAPIN1 from NADPH via the FAD- and FMN-containing protein NDOR1. NDOR1-CIAPIN1 are also required for the assembly of the diferric tyrosyl radical cofactor of ribonucleotide reductase (RNR), probably by providing electrons for reduction during radical cofactor maturation in the catalytic small subunit. Has anti-apoptotic effects in the cell. Involved in negative control of cell death upon cytokine withdrawal. Promotes development of hematopoietic cells. This is Anamorsin from Mus musculus (Mouse).